Consider the following 449-residue polypeptide: 23S rRNA (uracil(1939)-C(5))-methyltransferase RlmD (449 aa).

Positions 1–66 (MGRSRHHNKL…AKFDEAKVVE (66 aa)) constitute a TRAM domain. 4 residues coordinate [4Fe-4S] cluster: cysteine 79, cysteine 85, cysteine 88, and cysteine 169. S-adenosyl-L-methionine-binding residues include glutamine 280, phenylalanine 309, asparagine 314, glutamate 330, asparagine 357, and aspartate 379. Residue cysteine 405 is the Nucleophile of the active site.

The protein belongs to the class I-like SAM-binding methyltransferase superfamily. RNA M5U methyltransferase family. RlmD subfamily.

The enzyme catalyses uridine(1939) in 23S rRNA + S-adenosyl-L-methionine = 5-methyluridine(1939) in 23S rRNA + S-adenosyl-L-homocysteine + H(+). Catalyzes the formation of 5-methyl-uridine at position 1939 (m5U1939) in 23S rRNA. In Francisella tularensis subsp. novicida (strain U112), this protein is 23S rRNA (uracil(1939)-C(5))-methyltransferase RlmD.